The following is a 309-amino-acid chain: Malate dehydrogenase (309 aa).

NAD(+)-binding positions include 9 to 14 and D33; that span reads GAGFVG. Residues R82 and R88 each coordinate substrate. NAD(+) is bound by residues N95 and 118 to 120; that span reads VNN. Substrate contacts are provided by N120 and R151. H175 acts as the Proton acceptor in catalysis.

Belongs to the LDH/MDH superfamily. MDH type 3 family. Homotetramer (active enzyme); homodimer and homotrimer at temperatures lower than 55 degrees Celsius (inactive forms).

The catalysed reaction is (S)-malate + NAD(+) = oxaloacetate + NADH + H(+). Catalyzes the reversible oxidation of malate to oxaloacetate. This Chloroflexus aurantiacus (strain ATCC 29366 / DSM 635 / J-10-fl) protein is Malate dehydrogenase.